Consider the following 1534-residue polypeptide: DNA polymerase alpha catalytic subunit (1534 aa).

The segment covering 1–12 has biased composition (low complexity); it reads MDEGSADAGASG. 3 disordered regions span residues 1 to 23, 96 to 141, and 864 to 905; these read MDEG…SEAV, THRT…LSAA, and FNST…GPSY. A compositionally biased stretch (basic residues) spans 116-125; it reads RKRKQPRPQS. A compositionally biased stretch (low complexity) spans 127–141; it reads RPPQQSAAAASLSAA. Composition is skewed to basic and acidic residues over residues 864 to 882 and 889 to 898; these read FNST…RPDE and DEGHHVDQGK. Zn(2+) is bound by residues cysteine 1340, cysteine 1343, cysteine 1383, cysteine 1386, cysteine 1422, cysteine 1427, cysteine 1448, and cysteine 1454. Residues 1340–1386 form a CysA-type zinc finger; sequence CPSCSTTFDCPPVSSLIIGSSSGNVSNPNEGNDASINFWRRMRCPRC. The CysB motif motif lies at 1422–1451; sequence CDDEGCKYSTHSVNLRVMGDSERGTICPNY.

It belongs to the DNA polymerase type-B family.

It localises to the nucleus. The enzyme catalyses DNA(n) + a 2'-deoxyribonucleoside 5'-triphosphate = DNA(n+1) + diphosphate. Its function is as follows. Polymerase alpha in a complex with DNA primase is a replicative polymerase. In Oryza sativa subsp. japonica (Rice), this protein is DNA polymerase alpha catalytic subunit.